The primary structure comprises 131 residues: Biogenesis of lysosome-related organelles complex 1 subunit 5 (131 aa).

It belongs to the BLOC1S5 family. In terms of assembly, component of the biogenesis of lysosome-related organelles complex-1 (BLOC-1) composed at least of blos-1, blos-2, blos-4, dsbn-1, glo-2, mutd-1 and snpn-1.

Component of the biogenesis of lysosome-related organelles complex-1 (BLOC-1) involved in gut granule biogenesis. This Caenorhabditis elegans protein is Biogenesis of lysosome-related organelles complex 1 subunit 5 (mutd-1).